Consider the following 991-residue polypeptide: MHSRLKFLAYLHFICASSIFWPEFSSAQQQQQTVSLTEKIPLGAIFEQGTDDVQSAFKYAMLNHNLNVSSRRFELQAYVDVINTADAFKLSRLICNQFSRGVYSMLGAVSPDSFDTLHSYSNTFQMPFVTPWFPEKVLAPSSGLLDFAISMRPDYHQAIIDTIQYYGWQSIIYLYDSHDGLLRLQQIYQELKPGNETFRVQMVKRIANVTMAIEFLHTLEDLGRFSKKRIVLDCPAEMAKEIIVQHVRDIKLGRRTYHYLLSGLVMDNHWPSDVVEFGAINITGFRIVDSNRRAVRDFHDSRKRLEPSGQSQSQNAGGPNSLPAISAQAALMYDAVFVLVEAFNRILRKKPDQFRSNHLQRRSHGGSSSSSATGTNESSALLDCNTSKGWVTPWEQGEKISRVLRKVEIDGLSGEIRFDEDGRRINYTLHVVEMSVNSTLQQVAEWRDDAGLLPLHSHNYASSSRSASASTGDYDRNHTYIVSSLLEEPYLSLKQYTYGESLVGNDRFEGYCKDLADMLAAQLGIKYEIRLVQDGNYGAENQYAPGGWDGMVGELIRKEADIAISAMTITAERERVIDFSKPFMTLGISIMIKKPVKQTPGVFSFLNPLSQEIWISVILSYVGVSFVLYFVTRFPPYEWRIVRRPQADSTAQQPPGIIGGATLSEPQAHVPPVPPNEFTMLNSFWYSLAAFMQQGCDITPPSIAGRIAAAVWWFFTIILISSYTANLAAFLTVERMVAPIKTPEDLTMQTDVNYGTLLYGSTWEFFRRSQIGLHNKMWEYMNANQHHSVHTYDEGIRRVRQSKGKYALLVESPKNEYVNARPPCDTMKVGRNIDTKGFGVATPIGSPLRKRLNEAVLTLKENGELLRIRNKWWFDKTECNLDQETSTPNELSLSNVAGIYYILIGGLLLAVIVAIMEFFCRNKTPQLKSPGSNGSAGGVPGMLASSTYQRDSLSDAIMHSQAKLAMQASSEYDERLVGVELASNVRYQYSM.

Residues 1 to 27 (MHSRLKFLAYLHFICASSIFWPEFSSA) form the signal peptide. The Extracellular segment spans residues 28–611 (QQQQQTVSLT…VFSFLNPLSQ (584 aa)). 4 N-linked (GlcNAc...) asparagine glycosylation sites follow: asparagine 67, asparagine 195, asparagine 208, and asparagine 281. Disordered regions lie at residues 300 to 321 (DSRK…GPNS) and 354 to 379 (FRSN…NESS). Residues 308–318 (SGQSQSQNAGG) show a composition bias toward polar residues. Over residues 365–379 (GGSSSSSATGTNESS) the composition is skewed to low complexity. 5 N-linked (GlcNAc...) asparagine glycosylation sites follow: asparagine 376, asparagine 385, asparagine 426, asparagine 437, and asparagine 477. The chain crosses the membrane as a helical span at residues 612–632 (EIWISVILSYVGVSFVLYFVT). The Cytoplasmic portion of the chain corresponds to 633 to 710 (RFPPYEWRIV…PSIAGRIAAA (78 aa)). The chain crosses the membrane as a helical span at residues 711–731 (VWWFFTIILISSYTANLAAFL). Residues 732 to 895 (TVERMVAPIK…STPNELSLSN (164 aa)) are Extracellular-facing. Residues 896–916 (VAGIYYILIGGLLLAVIVAIM) form a helical membrane-spanning segment. The Cytoplasmic portion of the chain corresponds to 917–991 (EFFCRNKTPQ…ASNVRYQYSM (75 aa)).

The protein belongs to the glutamate-gated ion channel (TC 1.A.10.1) family. As to quaternary structure, homooligomer. Central nervous system.

Its subcellular location is the cell membrane. The protein resides in the postsynaptic cell membrane. Functionally, receptor for glutamate. L-glutamate acts as an excitatory neurotransmitter at many synapses in the central nervous system. The postsynaptic actions of Glu are mediated by a variety of receptors that are named according to their selective agonists. Forms ligand-gated ion channels which are activated by kainate. This chain is Glutamate receptor 1 (GluRIA), found in Drosophila melanogaster (Fruit fly).